The sequence spans 156 residues: VapC ribonuclease AF_1683 (156 aa).

In terms of domain architecture, PINc spans 4 to 125; that stretch reads LIDTGIFFGF…KLISYDSRFS (122 aa). 2 residues coordinate Mg(2+): Asp-6 and Asp-103.

Belongs to the PINc/VapC protein family. Requires Mg(2+) as cofactor.

In terms of biological role, toxic component of a type II toxin-antitoxin (TA) system. An RNase. This chain is VapC ribonuclease AF_1683, found in Archaeoglobus fulgidus (strain ATCC 49558 / DSM 4304 / JCM 9628 / NBRC 100126 / VC-16).